The following is a 617-amino-acid chain: Serine/threonine-protein phosphatase 2A activator 1 (617 aa).

Pro residues predominate over residues 1-11 (MDPTSKRPPPA). Disordered regions lie at residues 1–25 (MDPT…PKLE), 84–169 (VSTS…ESES), 230–261 (GAGG…TNEQ), 376–398 (SSPN…SDIT), and 572–617 (RFTP…PWTK). Over residues 84-93 (VSTSEPTTDG) the composition is skewed to polar residues. Low complexity predominate over residues 94–104 (QQQQQQQQQRQ). The segment covering 239-252 (EEGTETETETETEG) has biased composition (acidic residues).

The protein belongs to the PTPA-type PPIase family.

It is found in the cytoplasm. The protein resides in the nucleus. The enzyme catalyses [protein]-peptidylproline (omega=180) = [protein]-peptidylproline (omega=0). In terms of biological role, PPIases accelerate the folding of proteins. It catalyzes the cis-trans isomerization of proline imidic peptide bonds in oligopeptides. Acts as a regulatory subunit for PP2A-like phosphatases modulating their activity or substrate specificity, probably by inducing a conformational change in the catalytic subunit, a direct target of the PPIase. Can reactivate inactive phosphatase PP2A-phosphatase methylesterase complexes (PP2Ai) in presence of ATP and Mg(2+) by dissociating the inactive form from the complex. This chain is Serine/threonine-protein phosphatase 2A activator 1 (rrd-1), found in Neurospora crassa (strain ATCC 24698 / 74-OR23-1A / CBS 708.71 / DSM 1257 / FGSC 987).